We begin with the raw amino-acid sequence, 456 residues long: Glycine receptor subunit alpha-4 (456 aa).

The N-terminal stretch at 1–27 (MTTLVPASLFLLLWTLPGKVLLSVALA) is a signal peptide. Topologically, residues 28–256 (KEDVKSGLKG…KFHLERQMGY (229 aa)) are extracellular. The N-linked (GlcNAc...) asparagine glycan is linked to Asn-71. Disulfide bonds link Cys-171-Cys-185 and Cys-232-Cys-243. 236 to 241 (YNTGKF) is a strychnine binding site. Residues 257–278 (YLIQMYIPSLLIVILSWVSFWI) form a helical membrane-spanning segment. Topologically, residues 279–283 (NMDAA) are cytoplasmic. Residues 284 to 304 (PARVGLGITTVLTMTTQSSGS) traverse the membrane as a helical segment. The Extracellular segment spans residues 305–315 (RASLPKVSYVK). The helical transmembrane segment at 316 to 336 (AIDIWMAVCLLFVFAALLEYA) threads the bilayer. Residues 337-423 (AVNFVSRQHK…YVDRAKRIDT (87 aa)) lie on the Cytoplasmic side of the membrane. A helical membrane pass occupies residues 424–444 (ISRAVFPFTFLVFNIFYWVVY). The Extracellular portion of the chain corresponds to 445–456 (KVLRSEDIHQAL).

The protein belongs to the ligand-gated ion channel (TC 1.A.9) family. Glycine receptor (TC 1.A.9.3) subfamily. GLRA4 sub-subfamily. Homopentamer (in vitro). Heteropentamer composed of GLRA4 and GLRB. Detected in the retina inner plexiform layer, especially at the border between layer three and four (at protein level).

It is found in the postsynaptic cell membrane. It localises to the synapse. Its subcellular location is the perikaryon. The protein localises to the cell projection. The protein resides in the dendrite. It is found in the cell membrane. The catalysed reaction is chloride(in) = chloride(out). With respect to regulation, inhibited by strychnine. Functionally, glycine receptors are ligand-gated chloride channels. Channel opening is triggered by extracellular glycine. Channel opening is also triggered by taurine and beta-alanine. Plays a role in the down-regulation of neuronal excitability. Contributes to the generation of inhibitory postsynaptic currents. This is Glycine receptor subunit alpha-4 (Glra4) from Mus musculus (Mouse).